Consider the following 253-residue polypeptide: Large ribosomal subunit protein bL28m (253 aa).

The N-terminal 55 residues, 1-55 (MPLHKYPPALWDVLKLKDGIYARLPEHYRRSLLEKHKPYPVHWKPHGLKYRLNPK), are a transit peptide targeting the mitochondrion.

It belongs to the bacterial ribosomal protein bL28 family. In terms of assembly, component of the mitochondrial ribosome large subunit (39S) which comprises a 16S rRNA and about 50 distinct proteins.

It is found in the mitochondrion. The polypeptide is Large ribosomal subunit protein bL28m (mrpl28) (Xenopus laevis (African clawed frog)).